Here is a 106-residue protein sequence, read N- to C-terminus: MSHYIELTEENFESTIKKGVALVDFWAPWCGPCKMLSPVIDELASEYEGKAKICKVNTDEQEELSAKFGIRSIPTLLFTKDGEVVHQLVGVQTKVALKEQLNKLLG.

One can recognise a Thioredoxin domain in the interval 2-106 (SHYIELTEEN…LKEQLNKLLG (105 aa)). An intrachain disulfide couples Cys-30 to Cys-33.

The protein belongs to the thioredoxin family.

Its function is as follows. Participates in various redox reactions through the reversible oxidation of its active center dithiol to a disulfide and catalyzes dithiol-disulfide exchange reactions. This Helicobacter pylori (strain J99 / ATCC 700824) (Campylobacter pylori J99) protein is Thioredoxin (trxA).